Consider the following 136-residue polypeptide: uncharacterized protein (136 aa).

In terms of tissue distribution, widely expressed.

This is an uncharacterized protein from Homo sapiens (Human).